Consider the following 379-residue polypeptide: dTDP-3-amino-3,4,6-trideoxy-alpha-D-glucose transaminase (379 aa).

Pyridoxal 5'-phosphate contacts are provided by residues Gly-67, Gln-167, 188-193, Tyr-221, Tyr-227, 235-237, and Tyr-318; these read SFYPGK and NSR. Residue Lys-193 is modified to N6-(pyridoxal phosphate)lysine.

The protein belongs to the degT/dnrJ/eryC1 family. Homodimer. Requires pyridoxal 5'-phosphate as cofactor.

It catalyses the reaction dTDP-3-amino-3,4,6-trideoxy-alpha-D-glucose + 2-oxoglutarate = dTDP-3-dehydro-4,6-dideoxy-alpha-D-glucose + L-glutamate. It functions in the pathway antibiotic biosynthesis. Functionally, involved in the biosynthesis of dTDP-alpha-D-desosamine, a sugar found in several bacterial macrolide antibiotics. Catalyzes the reversible transfer of the amino group from L-glutamate to the C-3 position of dTDP-3-keto-4,6-deoxyglucose to yield dTDP-3-amino-3,4,6-trideoxyglucose. This is dTDP-3-amino-3,4,6-trideoxy-alpha-D-glucose transaminase from Streptomyces venezuelae.